A 1130-amino-acid polypeptide reads, in one-letter code: MGVPALFRWLSKKYPKIVERVKEDTPKKIRGPDGEIVEEPIRYENPNPNGFEVDNLYLDMNGIVHPCTHPEGRPAPETEEEMMVEIFKYTERVVNMCRPRKVLMMAIDGVAPRAKMNQQRSRRFRAAQEAADKEEERREAIKLFEAMGHAVSEETANHKSWDTNAITPGTPFMDLLSISLKYWVSHKLTTDPGWKDLKIILSDSSVPGEGEHKIMDWIRRQRSYPTWDANTSHVIYGLDADLIMLSLATHEPHFRVLREDVFAQSSKGPHACKNCGKVGHIAANCKSDKKFKDPNVAEVAKTEDPKPFIFLDVACLREYLAVELVVPGMPFPFDLELAIDDWIFMIFFVGNDFLPHLPSLEIREGAIDVLLKIWRAELPRMGGYLTNHGKVNLDRAQVILEGLAKSEDEIFQKRKDDEERQEHSQKRRRIEEHKRQDEDKAREEDRNTLTLNGTEYVAVDNPAATARGGPLHPSLPSRPAFDLVPKEDAVKQPEDQDQKAKKAMAGSNSDIVKNRKAIRMANMSAAQALKAELEGGNDVNVDDKKAIAQEGKEEDEAVVTVERTEDEEKEQLTKEEARGTLEEQGEKEGVDEEVVPPAIQTDEDEGEAPVGDATVAENDESTIPEDDEDPTHVPRKRKRGDSDGDEDSNEEDDDDDDDDAPPNPEADQPIPKKKLKVNADGTVDYEDDVKLWEPGYRERYYEKKFGVKLSEREFIDKVTKSYMEGLCWVLEYYYQGVPAWDWFYPYHYAPFAQDFRDVGSMDIKFETSIPFKPFAQLLGVFPAASRIHLPEPLQTLMIDEDSPILDFYPPDFEIDMNGKKMAWQGVALLPFIDQNRLLTALKSKEELLSDDEKRRNSWGDNVMFIANENPLYDLFCDKLYGLRAKDVSKPIPIDTKASYGITGSVLPDPNCVPASTFDTPIPSISECPDLNPNDSISVRYYFPRQAHPHRSILLRGYKPEPARLTESDKDWVRRGGQGGRRGHRHNGGGNGNVTGGPGMARGRYESGPPRTNGYQPPPPRSNYGGSSGYGYGAPAPLPSRPPVSSYGGGAGGYGYSNPYAAAPNPYAGGYGAPAPYAAGGYGQRPYVPPLPPPNPYSAPPPAYGRPPGGGYGYGAPPPRGGGYNPYPSRR.

Positions 121 to 147 (SRRFRAAQEAADKEEERREAIKLFEAM) form a coiled coil. The segment at 270 to 287 (HACKNCGKVGHIAANCKS) adopts a CCHC-type zinc-finger fold. Basic and acidic residues-rich tracts occupy residues 411–447 (FQKR…EDRN), 541–551 (VDDKKAIAQEG), and 570–588 (EQLT…GEKE). Disordered regions lie at residues 411 to 448 (FQKR…DRNT), 533 to 678 (LEGG…LKVN), 965 to 1036 (TESD…APAP), and 1072 to 1130 (APAP…PSRR). Positions 412-441 (QKRKDDEERQEHSQKRRRIEEHKRQDEDKA) form a coiled coil. 2 stretches are compositionally biased toward acidic residues: residues 617-629 (ENDE…DDED) and 643-660 (DGDE…DDDA). Gly residues predominate over residues 987-999 (GGGNGNVTGGPGM). Over residues 1086 to 1104 (YVPPLPPPNPYSAPPPAYG) the composition is skewed to pro residues.

Belongs to the 5'-3' exonuclease family. XRN2/RAT1 subfamily. As to quaternary structure, interacts with RAI1; the interaction is direct, stabilizes RAT1 protein structure and may stimulate its exoribonuclease activity. The interaction also stimulates RAI1 pyrophosphohydrolase activity, probably by recruiting it to mRNA substrates.

It localises to the nucleus. Possesses 5'-&gt;3' exoribonuclease activity. Required for the processing of nuclear mRNA and rRNA precursors. May promote the termination of transcription by RNA polymerase II. Essential for vegetative cell growth and chromosome segregation. The chain is 5'-3' exoribonuclease 2 (RAT1) from Cryptococcus neoformans var. neoformans serotype D (strain B-3501A) (Filobasidiella neoformans).